Reading from the N-terminus, the 164-residue chain is Cell division protein SepF (164 aa).

The disordered stretch occupies residues 21-71 (YQQGQQPAQQQQSPVQAVPTPVPAPQQQAKRAPVTPLHKPSTTTRNAAPAE). The span at 22–49 (QQGQQPAQQQQSPVQAVPTPVPAPQQQA) shows a compositional bias: low complexity.

It belongs to the SepF family. As to quaternary structure, homodimer. Interacts with FtsZ.

It is found in the cytoplasm. Cell division protein that is part of the divisome complex and is recruited early to the Z-ring. Probably stimulates Z-ring formation, perhaps through the cross-linking of FtsZ protofilaments. Its function overlaps with FtsA. This chain is Cell division protein SepF, found in Clavibacter sepedonicus (Clavibacter michiganensis subsp. sepedonicus).